A 550-amino-acid polypeptide reads, in one-letter code: MATKLIKHGSKAREQMLEGIDILADAVKVTLGPKGRNVLIEQSFGAPKITKDGVTVAKSIELKDKIRNAGAQLLKSAATKAAEVAGDGTTTATVLARALAREGNKLVAAGYNPMDLKRGMDLAVNTVLEEVKKASKKIDSQEEIAQVGTISSNGDKEIGEKIAKAMEEVGKEGVITVEEAKNFSFDVEVVKGMMFDRGYLSPYFVTNSEKMVAELENPYILLFEKKLSNLQPMLPILEAVVQSQRPLLIIAEDVEGEALATLVVNRLRGGLKVAAVKAPGFGDRRKAMMEDIAILTNGELITEDLGMKLENVSLKSLGHAKRVTISKENTVIVDGSGDKKNIEERVLQIKSHIAETTSDYDKEKLQERLAKLSGGVAVLKVGGATEVEVKERKDRVEDALAATRAAVEEGVVAGGGVTLLHASQALKNLKVDNKDQQAGIELVIEALKDPIKQIVENAGENGGVVVGKLLEHKDKNFGFNAQDMQYVDMIKAGIIDPAKVVRTALQDAASVASLIITTETLIVDEPEDKENPMPMRGGMGGMGGMGGMDF.

Residues 30-33, K51, 87-91, G415, and D496 contribute to the ATP site; these read TLGP and DGTTT.

It belongs to the chaperonin (HSP60) family. In terms of assembly, forms a cylinder of 14 subunits composed of two heptameric rings stacked back-to-back. Interacts with the co-chaperonin GroES.

The protein localises to the cytoplasm. The catalysed reaction is ATP + H2O + a folded polypeptide = ADP + phosphate + an unfolded polypeptide.. Its function is as follows. Together with its co-chaperonin GroES, plays an essential role in assisting protein folding. The GroEL-GroES system forms a nano-cage that allows encapsulation of the non-native substrate proteins and provides a physical environment optimized to promote and accelerate protein folding. The chain is Chaperonin GroEL from Rickettsia bellii (strain OSU 85-389).